The sequence spans 783 residues: uncharacterized protein (783 aa).

The interval 1–22 (MVNTRGYTTLPNVEEPANNSQD) is disordered. Over 1–109 (MVNTRGYTTL…SKIGNVMVMR (109 aa)) the chain is Cytoplasmic. The chain crosses the membrane as a helical; Signal-anchor for type II membrane protein span at residues 110-127 (RIFYIMMMSIIAALIIAS). Over 128–783 (DRLPNGKARG…NLHGINTNEF (656 aa)) the chain is Extracellular. N-linked (GlcNAc...) asparagine glycosylation is found at Asn139 and Asn213. The PA domain maps to 241-333 (HNGQLNNIPV…GTGDALTPEW (93 aa)). N-linked (GlcNAc...) asparagine glycosylation is present at Asn529.

It is found in the cell membrane. This is an uncharacterized protein from Saccharomyces cerevisiae (strain ATCC 204508 / S288c) (Baker's yeast).